Here is a 209-residue protein sequence, read N- to C-terminus: Uridine kinase (209 aa).

12-19 serves as a coordination point for ATP; it reads GGTGSGKS.

The protein belongs to the uridine kinase family.

The protein resides in the cytoplasm. It carries out the reaction uridine + ATP = UMP + ADP + H(+). The catalysed reaction is cytidine + ATP = CMP + ADP + H(+). The protein operates within pyrimidine metabolism; CTP biosynthesis via salvage pathway; CTP from cytidine: step 1/3. It functions in the pathway pyrimidine metabolism; UMP biosynthesis via salvage pathway; UMP from uridine: step 1/1. The protein is Uridine kinase of Clostridium tetani (strain Massachusetts / E88).